We begin with the raw amino-acid sequence, 816 residues long: Chitin synthase 1 (816 aa).

The interval 1-21 (MLSQGEILRNPSRTRLQRPPK) is disordered. The Cytoplasmic portion of the chain corresponds to 1–32 (MLSQGEILRNPSRTRLQRPPKSRSERKGWWYR). Residues 33–53 (VTIFLTCLIPNFMLRCFGMTT) form a helical membrane-spanning segment. Residues 54 to 63 (PEVQHAWREK) lie on the Extracellular side of the membrane. The helical transmembrane segment at 64-84 (VALCICIFFCWIILGFTTYGM) threads the bilayer. At 85 to 240 (NTIICKGSNQ…TPGCLLADTM (156 aa)) the chain is on the cytoplasmic side. The chain crosses the membrane as a helical span at residues 241-261 (FWITTISIFGLIITKFLLGFF). Residues 262-697 (YSWYAKRRPK…QLVVVMELFG (436 aa)) lie on the Extracellular side of the membrane. Asn319 and Asn664 each carry an N-linked (GlcNAc...) asparagine glycan. The helical transmembrane segment at 698-718 (TLVLPAAIIFTFVMIAVSILI) threads the bilayer. Residues 719–720 (EP) are Cytoplasmic-facing. A helical transmembrane segment spans residues 721–741 (AWVPLIMLVGIFGLPAVLILI). Residues 742–745 (TTME) are Extracellular-facing. Residues 746-766 (IQYVFWCLVYILSIPIWNFVL) traverse the membrane as a helical segment. Topologically, residues 767–816 (PTYAFWHFDNFSWGDTRKVDGEGKEDEEGEFDHTKIRIRELEEFLSEANK) are cytoplasmic.

The protein belongs to the chitin synthase family. Class IV subfamily.

It localises to the cell membrane. The catalysed reaction is [(1-&gt;4)-N-acetyl-beta-D-glucosaminyl](n) + UDP-N-acetyl-alpha-D-glucosamine = [(1-&gt;4)-N-acetyl-beta-D-glucosaminyl](n+1) + UDP + H(+). In terms of biological role, polymerizes chitin, a structural polymer of the cell wall and septum, by transferring the sugar moiety of UDP-GlcNAc to the non-reducing end of the growing chitin polymer. In Encephalitozoon cuniculi (strain GB-M1) (Microsporidian parasite), this protein is Chitin synthase 1 (CHS1).